The following is a 516-amino-acid chain: uncharacterized protein (516 aa).

The next 9 helical transmembrane spans lie at S183–V203, V261–I281, V308–L328, L329–F349, L356–L376, L379–A399, L430–L450, P461–L481, and I492–F512.

It is found in the cell membrane. Possible permease/transporter. This is an uncharacterized protein from Sinorhizobium fredii (strain NBRC 101917 / NGR234).